Consider the following 124-residue polypeptide: Meiotically up-regulated gene 103 protein (124 aa).

Its subcellular location is the nucleus. It is found in the nucleolus. Functionally, has a role in meiosis. The sequence is that of Meiotically up-regulated gene 103 protein (mug103) from Schizosaccharomyces pombe (strain 972 / ATCC 24843) (Fission yeast).